The following is a 767-amino-acid chain: MGSACEAGTDEPSRDDVKGTGNGILENGHSHKPEEEEWRNGMGEDLPNGHSTPPEPQQTDEQKEHQVQIVRWERFLPVKTLRVLLVENDDSTRQVVSALLRKCCYEVIPAENGLHAWQCLEDLQNHIDLVLTEVVMPRLSGIGLLSKITSHKICKDIPVIMMSSNDSMGTVFKCLSKGAVDFLVKPIRKNELKNLWQHVWRRCHSSSGSGSESGIRTQKCTKPKVDDEYENNSGSNNDNEDDDDNDEDDDDLSVGHNARDGSDNGSGTQSSWTKRAVEIDSPQQMSPDQPSDLPDSTCAQVIHPTSEICSNRWLPTANKRSGKKHKENNDDSMGKYLEIGAPRNSSMEYQSSPREMSVNPTEKQHETLMPQSKTTRETDSRNTQNEPTTQTVDLISSIARSTDDKQVVRINNAPDCSSKVPDGNDKNRDSLIDMTSEELGLKRLKTTGSATEIHDERNILKRSDLSAFTRYHTTVASNQGGAGFGGSCSPQDNSSEALKTDSNCKVKSNSDAAEIKQGSNGSSNNNDMGSSTKNAITKPSSNRGKVISPSAVKATQHTSAFHPVQRQTSPANVVGKDKVDEGIANGVNVGHPVDVQNSFMQHHHHVHYYVHVMTQQQQQPSIERGSSDAQCGSSNVFDPPIEGHAANYSVNGSFSGGHNGNNGQRGPSTAPNVGRPNMETVNGIVDENGAGGGNGSGSGSGNDLYQNGVCYREAALNKFRQKRKVRNFGKKVRYQSRKRLAEQRPRIRGQFVRQSGQEDQAGQDEDR.

Positions 1–64 are disordered; the sequence is MGSACEAGTD…EPQQTDEQKE (64 aa). A Response regulatory domain is found at 82–200; sequence RVLLVENDDS…ELKNLWQHVW (119 aa). Low complexity predominate over residues 205–214; it reads SSSGSGSESG. Disordered stretches follow at residues 205–272, 312–388, 476–546, 646–701, and 727–767; these read SSSG…QSSW, RWLP…NEPT, ASNQ…RGKV, ANYS…SGSG, and NFGK…DEDR. A compositionally biased stretch (acidic residues) spans 238–252; sequence DNEDDDDNDEDDDDL. Composition is skewed to polar residues over residues 263-272, 343-361, and 488-497; these read DNGSGTQSSW, RNSS…VNPT, and CSPQDNSSEA. Low complexity predominate over residues 518 to 531; sequence GSNGSSNNNDMGSS. Residues 532-543 are compositionally biased toward polar residues; it reads TKNAITKPSSNR. Residues 689-700 show a composition bias toward gly residues; sequence GAGGGNGSGSGS. The 43-residue stretch at 712–754 folds into the CCT domain; the sequence is REAALNKFRQKRKVRNFGKKVRYQSRKRLAEQRPRIRGQFVRQ. Residues 727–738 show a composition bias toward basic residues; the sequence is NFGKKVRYQSRK.

It belongs to the ARR-like family.

The protein resides in the nucleus. Functionally, controls photoperiodic flowering response. Seems to be one of the component of the circadian clock. Expression of several members of the ARR-like family is controlled by circadian rhythm. The particular coordinated sequential expression of PRR73, PRR37, PRR95, PRR59 and PPR1 result to circadian waves that may be at the basis of the endogenous circadian clock. In Oryza sativa subsp. japonica (Rice), this protein is Two-component response regulator-like PRR73 (PRR73).